Reading from the N-terminus, the 153-residue chain is Cytochrome c-type biogenesis protein CcmE (153 aa).

Over 1–8 the chain is Cytoplasmic; that stretch reads MATRRGRR. A helical; Signal-anchor for type II membrane protein membrane pass occupies residues 9 to 29; it reads ALLIAGGVGLLALAAALVLNA. Residues 30–153 lie on the Periplasmic side of the membrane; that stretch reads LRSNLVFFFS…PSATLQTEAR (124 aa). Positions 124 and 128 each coordinate heme.

This sequence belongs to the CcmE/CycJ family.

It localises to the cell inner membrane. In terms of biological role, heme chaperone required for the biogenesis of c-type cytochromes. Transiently binds heme delivered by CcmC and transfers the heme to apo-cytochromes in a process facilitated by CcmF and CcmH. This chain is Cytochrome c-type biogenesis protein CcmE, found in Bordetella bronchiseptica (strain ATCC BAA-588 / NCTC 13252 / RB50) (Alcaligenes bronchisepticus).